Consider the following 248-residue polypeptide: DnaA regulatory inactivator Hda (248 aa).

This sequence belongs to the DnaA family. HdA subfamily. As to quaternary structure, the active form seems to be an ADP-bound monomer. Forms the RIDA complex (regulatory inactivation of DnaA) of ATP-DnaA, ADP-Hda and the DNA-loaded beta sliding clamp (dnaN).

In terms of biological role, mediates the interaction of DNA replication initiator protein DnaA with DNA polymerase subunit beta sliding clamp (dnaN). Stimulates hydrolysis of ATP-DnaA to ADP-DnaA, rendering DnaA inactive for reinitiation, a process called regulatory inhibition of DnaA or RIDA. This is DnaA regulatory inactivator Hda from Proteus mirabilis (strain HI4320).